A 168-amino-acid polypeptide reads, in one-letter code: RxLR effector protein CRE8 (168 aa).

The N-terminal stretch at 1–23 (MRLPSILVVAASTLFLHYGYTSA) is a signal peptide. Residues 54-69 (RFLRDGKIAEGDNEER) carry the RxLR-dEER motif.

The protein belongs to the RxLR effector family.

It localises to the secreted. The protein resides in the host cell. Functionally, effector that is involved in host plant infection. Contributes to virulence during the early infection stage, by inhibiting plant defense responses induced by both PAMP-triggered immunity (PTI) and effector-triggered immunity (ETI). In Phytophthora infestans (strain T30-4) (Potato late blight agent), this protein is RxLR effector protein CRE8.